A 296-amino-acid chain; its full sequence is Ribosomal RNA small subunit methyltransferase H (296 aa).

S-adenosyl-L-methionine-binding positions include 38–40 (GVH), E57, F88, D103, and H110.

It belongs to the methyltransferase superfamily. RsmH family.

The protein localises to the cytoplasm. The catalysed reaction is cytidine(1402) in 16S rRNA + S-adenosyl-L-methionine = N(4)-methylcytidine(1402) in 16S rRNA + S-adenosyl-L-homocysteine + H(+). Its function is as follows. Specifically methylates the N4 position of cytidine in position 1402 (C1402) of 16S rRNA. This Borreliella burgdorferi (strain ZS7) (Borrelia burgdorferi) protein is Ribosomal RNA small subunit methyltransferase H.